A 182-amino-acid chain; its full sequence is CASP-like protein 2B1 (182 aa).

Topologically, residues 1–12 (MKLIDRRMRLTE) are cytoplasmic. The helical transmembrane segment at 13-31 (LLLRCSISVFALLALILVV) threads the bilayer. The Extracellular segment spans residues 32–52 (TDTEVKLIFTIKKTAKYTDMK). Residues 53-73 (AVVFLVVANGIAAVYSLLQSV) form a helical membrane-spanning segment. The Cytoplasmic segment spans residues 74–89 (RCVVGTMKGRVLFSKP). The chain crosses the membrane as a helical span at residues 90 to 110 (LAWAFFSGDQAMAYLNVAAIA). Topologically, residues 111-141 (ATAESGVIAREGEEDLQWMRVCNMYGKFCNQ) are extracellular. The chain crosses the membrane as a helical span at residues 142–162 (MAIGVSSALLASIAMVFVSCI). Topologically, residues 163 to 182 (SAFSLFRLYGATRDRRTTPW) are cytoplasmic.

This sequence belongs to the Casparian strip membrane proteins (CASP) family. Homodimer and heterodimers.

The protein localises to the cell membrane. This is CASP-like protein 2B1 from Arabidopsis lyrata subsp. lyrata (Lyre-leaved rock-cress).